Consider the following 409-residue polypeptide: Tyrosine--tRNA ligase (409 aa).

Position 39 (Tyr39) interacts with L-tyrosine. A 'HIGH' region motif is present at residues 44 to 53 (PTAPSLHVGS). Positions 176 and 180 each coordinate L-tyrosine. The short motif at 236 to 240 (KMGKT) is the 'KMSKS' region element. Position 239 (Lys239) interacts with ATP. One can recognise an S4 RNA-binding domain in the interval 346–409 (IGIVDALVGL…KKKHGILRKA (64 aa)).

The protein belongs to the class-I aminoacyl-tRNA synthetase family. TyrS type 1 subfamily. As to quaternary structure, homodimer.

The protein localises to the cytoplasm. It catalyses the reaction tRNA(Tyr) + L-tyrosine + ATP = L-tyrosyl-tRNA(Tyr) + AMP + diphosphate + H(+). Its function is as follows. Catalyzes the attachment of tyrosine to tRNA(Tyr) in a two-step reaction: tyrosine is first activated by ATP to form Tyr-AMP and then transferred to the acceptor end of tRNA(Tyr). The sequence is that of Tyrosine--tRNA ligase from Novosphingobium aromaticivorans (strain ATCC 700278 / DSM 12444 / CCUG 56034 / CIP 105152 / NBRC 16084 / F199).